The following is a 72-amino-acid chain: uncharacterized protein (72 aa).

It belongs to the asfivirus I73R family.

The protein resides in the virion. This is an uncharacterized protein from African swine fever virus (isolate Warthog/Namibia/Wart80/1980) (ASFV).